Here is a 639-residue protein sequence, read N- to C-terminus: Chaperone protein HtpG (639 aa).

The segment at 1–343 (MEATATKEHL…SNDLPLNVSR (343 aa)) is a; substrate-binding. Residues 344 to 564 (EILQESKDIE…THDMSGNLER (221 aa)) form a b region. The c stretch occupies residues 565-639 (LLKSAGQKVT…QLFLSTGSKE (75 aa)).

This sequence belongs to the heat shock protein 90 family. In terms of assembly, homodimer.

Its subcellular location is the cytoplasm. In terms of biological role, molecular chaperone. Has ATPase activity. This chain is Chaperone protein HtpG, found in Nitrosospira multiformis (strain ATCC 25196 / NCIMB 11849 / C 71).